The primary structure comprises 157 residues: MQLTVKALQGRECSLQVPEDELVSTLKQLVSEKLNVPVRQQRLLFKGKALADGKRLSDYSIGPNSKLNLVVKPLEKVLLEEGEAQRLADSPPPQVWQLISKVLARHFSAADASRVLEQLQRDYERSLSRLTLDDIERLASRFLHPEVTETMEKGFSK.

One can recognise a Ubiquitin-like domain in the interval 1–76 (MQLTVKALQG…LNLVVKPLEK (76 aa)). Lys48 is covalently cross-linked (Glycyl lysine isopeptide (Lys-Gly) (interchain with G-Cter in ubiquitin)). The residue at position 90 (Ser90) is a Phosphoserine. The segment at 96 to 138 (WQLISKVLARHFSAADASRVLEQLQRDYERSLSRLTLDDIERL) is required and sufficient for interaction with BAG6.

As to quaternary structure, component of the BAG6/BAT3 complex, at least composed of BAG6, UBL4A and GET4/TRC35. Interacts with BAG6; the interaction is direct and required for UBL4A protein stability. Interacts with USP13; may be indirect via BAG6. In terms of processing, polyubiquitinated. Ubiquitination by AMFR and deubiquitination by USP13 may regulate the interaction between the BAG6/BAT3 complex and SGTA and therefore may regulate client proteins fate.

Its subcellular location is the cytoplasm. The protein localises to the cytosol. The protein resides in the nucleus. In terms of biological role, as part of a cytosolic protein quality control complex, the BAG6/BAT3 complex, maintains misfolded and hydrophobic patches-containing proteins in a soluble state and participates in their proper delivery to the endoplasmic reticulum or alternatively can promote their sorting to the proteasome where they undergo degradation. The BAG6/BAT3 complex is involved in the post-translational delivery of tail-anchored/type II transmembrane proteins to the endoplasmic reticulum membrane. Recruited to ribosomes, it interacts with the transmembrane region of newly synthesized tail-anchored proteins and together with SGTA and ASNA1 mediates their delivery to the endoplasmic reticulum. Client proteins that cannot be properly delivered to the endoplasmic reticulum are ubiquitinated and sorted to the proteasome. Similarly, the BAG6/BAT3 complex also functions as a sorting platform for proteins of the secretory pathway that are mislocalized to the cytosol either delivering them to the proteasome for degradation or to the endoplasmic reticulum. The BAG6/BAT3 complex also plays a role in the endoplasmic reticulum-associated degradation (ERAD), a quality control mechanism that eliminates unwanted proteins of the endoplasmic reticulum through their retrotranslocation to the cytosol and their targeting to the proteasome. It maintains these retrotranslocated proteins in an unfolded yet soluble state condition in the cytosol to ensure their proper delivery to the proteasome. This chain is Ubiquitin-like protein 4A, found in Homo sapiens (Human).